The chain runs to 457 residues: ATP-dependent RNA helicase DbpA (457 aa).

A Q motif motif is present at residues Ala-3–Ala-31. The region spanning Leu-34–Ile-205 is the Helicase ATP-binding domain. An ATP-binding site is contributed by Ala-47 to Thr-54. The DEAD box motif lies at Asp-153–Asp-156. The 147-residue stretch at Pro-230–Ala-376 folds into the Helicase C-terminal domain. The tract at residues Ala-383–Lys-457 is involved in 23S rRNA binding.

Belongs to the DEAD box helicase family. DbpA subfamily. In terms of assembly, monomer.

It is found in the cytoplasm. It carries out the reaction ATP + H2O = ADP + phosphate + H(+). With respect to regulation, requires hairpin 92 of 23S rRNA for optimal activity. ATPase activity is stimulated by interaction of the N-terminal domain with RNA. Its function is as follows. DEAD-box RNA helicase involved in the assembly of the 50S ribosomal subunit. Has an RNA-dependent ATPase activity, which is specific for 23S rRNA, and a 3' to 5' RNA helicase activity that uses the energy of ATP hydrolysis to destabilize and unwind short rRNA duplexes. Requires a single-stranded RNA loading site on the 3' side of the substrate helix. This chain is ATP-dependent RNA helicase DbpA, found in Escherichia coli (strain K12).